A 505-amino-acid polypeptide reads, in one-letter code: Glycerol kinase (505 aa).

Residue Thr14 coordinates ADP. Residues Thr14, Thr15, and Ser16 each contribute to the ATP site. Residue Thr14 coordinates sn-glycerol 3-phosphate. Arg18 lines the ADP pocket. Residues Arg84, Glu85, Tyr136, and Asp246 each contribute to the sn-glycerol 3-phosphate site. The glycerol site is built by Arg84, Glu85, Tyr136, Asp246, and Gln247. Positions 268 and 311 each coordinate ADP. 4 residues coordinate ATP: Thr268, Gly311, Gln315, and Gly412. ADP is bound by residues Gly412 and Asn416.

The protein belongs to the FGGY kinase family.

It carries out the reaction glycerol + ATP = sn-glycerol 3-phosphate + ADP + H(+). It functions in the pathway polyol metabolism; glycerol degradation via glycerol kinase pathway; sn-glycerol 3-phosphate from glycerol: step 1/1. Inhibited by fructose 1,6-bisphosphate (FBP). Key enzyme in the regulation of glycerol uptake and metabolism. Catalyzes the phosphorylation of glycerol to yield sn-glycerol 3-phosphate. In Vibrio cholerae serotype O1 (strain ATCC 39315 / El Tor Inaba N16961), this protein is Glycerol kinase.